We begin with the raw amino-acid sequence, 571 residues long: FAD-linked oxidoreductase patO (571 aa).

Positions methionine 1–glycine 23 are cleaved as a signal peptide. N-linked (GlcNAc...) asparagine glycans are attached at residues asparagine 47, asparagine 101, asparagine 125, asparagine 179, asparagine 341, asparagine 374, asparagine 380, asparagine 421, asparagine 445, and asparagine 480. The FAD-binding PCMH-type domain occupies threonine 115–aspartate 294.

It belongs to the oxygen-dependent FAD-linked oxidoreductase family. FAD is required as a cofactor.

It is found in the vacuole lumen. Its pathway is mycotoxin biosynthesis; patulin biosynthesis. Its function is as follows. FAD-linked oxidoreductase; part of the gene cluster that mediates the biosynthesis of patulin, an acetate-derived tetraketide mycotoxin produced by several fungal species that shows antimicrobial properties against several bacteria. PatO acts with patJ in the vacuole to convert gentisyl alcohol to isoepoxydon. The pathway begins with the synthesis of 6-methylsalicylic acid by the polyketide synthase (PKS) patK via condensation of acetate and malonate units. The 6-methylsalicylic acid decarboxylase patG then catalyzes the decarboxylation of 6-methylsalicylic acid to yield m-cresol (also known as 3-methylphenol). These first reactions occur in the cytosol. The intermediate m-cresol is then transported into the endoplasmic reticulum where the cytochrome P450 monooxygenase patH converts it to m-hydroxybenzyl alcohol, which is further converted to gentisyl alcohol by the cytochrome P450 monooxygenase patI. The oxidoreductases patJ and patO further convert gentisyl alcohol to isoepoxydon in the vacuole. PatN catalyzes then the transformation of isoepoxydon into phyllostine. The cluster protein patF is responsible for the conversion from phyllostine to neopatulin whereas the alcohol dehydrogenase patD converts neopatulin to E-ascladiol. The steps between isoepoxydon and E-ascladiol occur in the cytosol, and E-ascladiol is probably secreted to the extracellular space by one of the cluster-specific transporters patC or patM. Finally, the secreted patulin synthase patE catalyzes the conversion of E-ascladiol to patulin. The sequence is that of FAD-linked oxidoreductase patO from Penicillium expansum (Blue mold rot fungus).